A 1843-amino-acid polypeptide reads, in one-letter code: Nonribosomal peptide synthetase SIDD (1843 aa).

Positions 1–83 (MLSIDDHGGG…QQQQQQQQRS (83 aa)) are disordered. Positions 65-81 (QQQQQQQQQQQQQQQQQ) are enriched in low complexity. The interval 133 to 528 (TYSELEHLST…TEVEHHIQTC (396 aa)) is adenylation 1. The disordered stretch occupies residues 628–647 (KLGATHADEGPQEEPETDAE). In terms of domain architecture, Carrier 1 spans 641-716 (EPETDAEKKL…AMANKSTSIS (76 aa)). Residue Ser677 is modified to O-(pantetheine 4'-phosphoryl)serine. The condensation 1 stretch occupies residues 753–1175 (VEDVYPCTPL…ALSDDDAAAL (423 aa)). Residues 1289–1365 (SATSQRQRRL…EMAAVMECTD (77 aa)) enclose the Carrier 2 domain. O-(pantetheine 4'-phosphoryl)serine is present on Ser1326. Positions 1447–1734 (FFDGPVDLRR…LREIAENCGL (288 aa)) are condensation 2.

This sequence belongs to the NRP synthetase family. Requires pantetheine 4'-phosphate as cofactor.

It functions in the pathway siderophore biosynthesis. Nonribosomal peptide synthetase; part of the gene cluster that mediates the biosynthesis of at least 11 siderophores, including beauverichelin A, dimerumic acid (DA), Na-dimethyl coprogen (NADC), eleutherazine B, ferricrocin (FC), fusarinine A, fusarinine C (FsC), metachelin A, mevalonolactone, rhodotorulic acid (RA) and tenellin. This cocktail of siderophores for iron metabolism is essential for virulence, and more specifically for the fungal virulence in penetrating through the host cuticle. Siderophore synthesis is also involved in conidial germination under iron-deficient conditions. SIDC catalyzes the assembly of ferricrocin whereas SIDD catalyzes the assembly of fusarinine C. The sequence is that of Nonribosomal peptide synthetase SIDD from Beauveria bassiana (strain ARSEF 2860) (White muscardine disease fungus).